The chain runs to 187 residues: Elongation factor P (187 aa).

This sequence belongs to the elongation factor P family.

The protein localises to the cytoplasm. It functions in the pathway protein biosynthesis; polypeptide chain elongation. In terms of biological role, involved in peptide bond synthesis. Stimulates efficient translation and peptide-bond synthesis on native or reconstituted 70S ribosomes in vitro. Probably functions indirectly by altering the affinity of the ribosome for aminoacyl-tRNA, thus increasing their reactivity as acceptors for peptidyl transferase. In Corynebacterium efficiens (strain DSM 44549 / YS-314 / AJ 12310 / JCM 11189 / NBRC 100395), this protein is Elongation factor P.